The sequence spans 456 residues: Argininosuccinate lyase (456 aa).

This sequence belongs to the lyase 1 family. Argininosuccinate lyase subfamily.

It is found in the cytoplasm. The enzyme catalyses 2-(N(omega)-L-arginino)succinate = fumarate + L-arginine. It participates in amino-acid biosynthesis; L-arginine biosynthesis; L-arginine from L-ornithine and carbamoyl phosphate: step 3/3. The polypeptide is Argininosuccinate lyase (Shewanella woodyi (strain ATCC 51908 / MS32)).